Consider the following 280-residue polypeptide: 4-hydroxy-3-methylbut-2-enyl diphosphate reductase (280 aa).

Cys-12 lines the [4Fe-4S] cluster pocket. (2E)-4-hydroxy-3-methylbut-2-enyl diphosphate contacts are provided by His-40 and His-72. Dimethylallyl diphosphate contacts are provided by His-40 and His-72. Residues His-40 and His-72 each coordinate isopentenyl diphosphate. Cys-94 contacts [4Fe-4S] cluster. A (2E)-4-hydroxy-3-methylbut-2-enyl diphosphate-binding site is contributed by His-122. Residue His-122 coordinates dimethylallyl diphosphate. His-122 lines the isopentenyl diphosphate pocket. Glu-124 functions as the Proton donor in the catalytic mechanism. A (2E)-4-hydroxy-3-methylbut-2-enyl diphosphate-binding site is contributed by Thr-160. Position 188 (Cys-188) interacts with [4Fe-4S] cluster. Positions 216, 218, and 260 each coordinate (2E)-4-hydroxy-3-methylbut-2-enyl diphosphate. Residues Ser-216, Asn-218, and Ser-260 each coordinate dimethylallyl diphosphate. Residues Ser-216, Asn-218, and Ser-260 each coordinate isopentenyl diphosphate.

The protein belongs to the IspH family. The cofactor is [4Fe-4S] cluster.

It carries out the reaction isopentenyl diphosphate + 2 oxidized [2Fe-2S]-[ferredoxin] + H2O = (2E)-4-hydroxy-3-methylbut-2-enyl diphosphate + 2 reduced [2Fe-2S]-[ferredoxin] + 2 H(+). It catalyses the reaction dimethylallyl diphosphate + 2 oxidized [2Fe-2S]-[ferredoxin] + H2O = (2E)-4-hydroxy-3-methylbut-2-enyl diphosphate + 2 reduced [2Fe-2S]-[ferredoxin] + 2 H(+). It functions in the pathway isoprenoid biosynthesis; dimethylallyl diphosphate biosynthesis; dimethylallyl diphosphate from (2E)-4-hydroxy-3-methylbutenyl diphosphate: step 1/1. The protein operates within isoprenoid biosynthesis; isopentenyl diphosphate biosynthesis via DXP pathway; isopentenyl diphosphate from 1-deoxy-D-xylulose 5-phosphate: step 6/6. Catalyzes the conversion of 1-hydroxy-2-methyl-2-(E)-butenyl 4-diphosphate (HMBPP) into a mixture of isopentenyl diphosphate (IPP) and dimethylallyl diphosphate (DMAPP). Acts in the terminal step of the DOXP/MEP pathway for isoprenoid precursor biosynthesis. The polypeptide is 4-hydroxy-3-methylbut-2-enyl diphosphate reductase (Trichlorobacter lovleyi (strain ATCC BAA-1151 / DSM 17278 / SZ) (Geobacter lovleyi)).